The following is an 85-amino-acid chain: Putative membrane protein insertion efficiency factor (85 aa).

It belongs to the UPF0161 family.

It localises to the cell inner membrane. In terms of biological role, could be involved in insertion of integral membrane proteins into the membrane. This Escherichia fergusonii (strain ATCC 35469 / DSM 13698 / CCUG 18766 / IAM 14443 / JCM 21226 / LMG 7866 / NBRC 102419 / NCTC 12128 / CDC 0568-73) protein is Putative membrane protein insertion efficiency factor.